A 165-amino-acid polypeptide reads, in one-letter code: Endoribonuclease YbeY (165 aa).

Residues H119, H123, and H129 each contribute to the Zn(2+) site.

This sequence belongs to the endoribonuclease YbeY family. The cofactor is Zn(2+).

It is found in the cytoplasm. Its function is as follows. Single strand-specific metallo-endoribonuclease involved in late-stage 70S ribosome quality control and in maturation of the 3' terminus of the 16S rRNA. This chain is Endoribonuclease YbeY, found in Streptomyces griseus subsp. griseus (strain JCM 4626 / CBS 651.72 / NBRC 13350 / KCC S-0626 / ISP 5235).